Here is a 2785-residue protein sequence, read N- to C-terminus: Testis-expressed protein 15 (2785 aa).

A compositionally biased stretch (low complexity) spans 262-274; it reads SSSFPSSLSNAFS. Disordered regions lie at residues 262–331, 596–620, 661–683, 904–924, 943–1064, 2276–2458, 2470–2511, and 2571–2601; these read SSSF…PSSD, EQRDDKNPNEAKEHNTDNINGSEKQ, NGKPAETASSESEAVEQRHAPND, TESTEPETNKEGNASGFGMCS, VQES…QGRI, NRQE…TNDK, DIDA…LVPD, and TQPIKSESPKKSMTDAPNPNTAPFGSYGNSA. Residues 275–286 show a composition bias toward basic and acidic residues; sequence DVRKQKHSEEQV. Over residues 314-331 the composition is skewed to polar residues; that stretch reads TCSNDSQGHFSQESPSSD. Positions 596 to 611 are enriched in basic and acidic residues; it reads EQRDDKNPNEAKEHNT. Polar residues-rich tracts occupy residues 962-989 and 1021-1031; these read HNTHVDQGSGKPNNDSLSTEPSNVTVMN and HASSSRGQNIA. The span at 1033–1042 shows a compositional bias: basic and acidic residues; that stretch reads KDLREHETHE. Composition is skewed to polar residues over residues 1049-1064, 2291-2314, 2327-2338, 2353-2387, 2394-2415, 2431-2454, 2491-2502, and 2585-2601; these read SHGSSDRFSSLSQGRI, DSSQPGVSEQTPPGTECTVKNISD, EVSQGKGNTDTV, NIQTVSKHPSTTGSPPNDENKIGSNSSDSLKSISA, RQSSVLGSVSPAESVQDTCTPK, ASLTEQQENSNVIEKRNGNSSVAE, DHTQISPSNLTA, and DAPNPNTAPFGSYGNSA.

It belongs to the TEX15 family. As to quaternary structure, interacts with PIWIL4. Interacts with PIWIL2. As to expression, detected in testis and ovary, and at lower levels in lung and brain.

The protein localises to the cytoplasm. The protein resides in the nucleus. Functionally, required during spermatogenesis for normal chromosome synapsis and meiotic recombination in germ cells. Necessary for formation of DMC1 and RAD51 foci on meiotic chromosomes, suggesting a specific role in DNA double-stranded break repair. Essential executor of PIWIL4-piRNA pathway directed transposon DNA methylation and silencing in the male embryonic germ cells. PIWIL4-piRNA binds to nascent transposon transcripts and interacts with TEX15, which may in turn recruit the epigenetic silencing machinery to the transposon loci. Not required for piRNA biosynthesis. This chain is Testis-expressed protein 15, found in Mus musculus (Mouse).